Reading from the N-terminus, the 272-residue chain is tRNA pseudouridine synthase A (272 aa).

Residue Asp51 is the Nucleophile of the active site. Residue Tyr109 coordinates substrate.

It belongs to the tRNA pseudouridine synthase TruA family. As to quaternary structure, homodimer.

The enzyme catalyses uridine(38/39/40) in tRNA = pseudouridine(38/39/40) in tRNA. Its function is as follows. Formation of pseudouridine at positions 38, 39 and 40 in the anticodon stem and loop of transfer RNAs. The sequence is that of tRNA pseudouridine synthase A from Verminephrobacter eiseniae (strain EF01-2).